Reading from the N-terminus, the 464-residue chain is Lysosomal dipeptide transporter MFSD1 (464 aa).

The Dileucine internalization motif motif lies at leucine 11–leucine 12. At serine 20 the chain carries Phosphoserine. 12 helical membrane-spanning segments follow: residues leucine 38–cysteine 58, leucine 82–isoleucine 102, threonine 112–phenylalanine 132, alanine 134–valine 154, leucine 190–leucine 210, leucine 214–leucine 234, leucine 265–leucine 285, alanine 303–valine 323, isoleucine 330–threonine 350, leucine 360–valine 380, phenylalanine 391–leucine 411, and leucine 417–leucine 437.

It belongs to the major facilitator superfamily. Homodimer. Interacts with lysosomal protein GLMP (via lumenal domain); the interaction starts while both proteins are still in the endoplasmic reticulum and is required for stabilization of MFSD1 in lysosomes but has no direct effect on its targeting to lysosomes or transporter activity. Not N-glycosylated. As to expression, in brain, expressed in the cortex, striatum hippocampus, hypothalamus, thalamus and brainstem (at protein level). Widely expressed with highest levels in kidney and spleen (at protein level).

The protein localises to the lysosome membrane. It catalyses the reaction L-alpha-aminoacyl-L-arginine(out) = L-alpha-aminoacyl-L-arginine(in). It carries out the reaction L-arginyl-L-alpha-amino acid(out) = L-arginyl-L-alpha-amino acid(in). The catalysed reaction is L-arginyl-glycine(out) = L-arginyl-glycine(in). The enzyme catalyses L-alpha-aminoacyl-L-lysine(out) = L-alpha-aminoacyl-L-lysine(in). It catalyses the reaction L-aspartyl-L-lysine(out) = L-aspartyl-L-lysine(in). It carries out the reaction L-alanyl-L-lysine(out) = L-alanyl-L-lysine(in). The catalysed reaction is L-lysyl-L-alpha-amino acid(out) = L-lysyl-L-alpha-amino acid(in). The enzyme catalyses L-lysyl-L-alanine(out) = L-lysyl-L-alanine(in). It catalyses the reaction L-lysyl-L-lysine(out) = L-lysyl-L-lysine(in). It carries out the reaction L-lysyl-glycine(out) = L-lysyl-glycine(in). The catalysed reaction is L-alpha-aminoacyl-L-histidine(out) = L-alpha-aminoacyl-L-histidine(in). The enzyme catalyses L-histidyl-L-alpha-amino acid(out) = L-histidyl-L-alpha-amino acid(in). It catalyses the reaction L-histidyl-glycine(out) = L-histidyl-glycine(in). Lysosomal dipeptide uniporter that selectively exports lysine, arginine or histidine-containing dipeptides with a net positive charge from the lysosome lumen into the cytosol. Could play a role in a specific type of protein O-glycosylation indirectly regulating macrophages migration and tissue invasion. Also essential for liver homeostasis. The chain is Lysosomal dipeptide transporter MFSD1 from Mus musculus (Mouse).